The primary structure comprises 54 residues: Lectin alpha chain (54 aa).

Belongs to the leguminous lectin family. As to quaternary structure, tetramer of two alpha and two beta chains.

The chain is Lectin alpha chain from Lathyrus tingitanus (Tangier pea).